The following is a 508-amino-acid chain: GMP synthase [glutamine-hydrolyzing] (508 aa).

In terms of domain architecture, Glutamine amidotransferase type-1 spans 1-189 (MILVLDFGSQ…ALLVCGCEKT (189 aa)). The active-site Nucleophile is Cys78. Residues His163 and Glu165 contribute to the active site. Residues 190–383 (WGMQHFAQRE…LGVSQDFLMR (194 aa)) enclose the GMPS ATP-PPase domain. 217 to 223 (SGGVDST) serves as a coordination point for ATP.

In terms of assembly, homodimer.

It catalyses the reaction XMP + L-glutamine + ATP + H2O = GMP + L-glutamate + AMP + diphosphate + 2 H(+). Its pathway is purine metabolism; GMP biosynthesis; GMP from XMP (L-Gln route): step 1/1. Functionally, catalyzes the synthesis of GMP from XMP. This is GMP synthase [glutamine-hydrolyzing] (guaA) from Helicobacter pylori (strain ATCC 700392 / 26695) (Campylobacter pylori).